Consider the following 162-residue polypeptide: NADH-quinone oxidoreductase subunit I (162 aa).

4Fe-4S ferredoxin-type domains lie at 52-82 and 93-122; these read LRRY…IEAG and VRYD…EGPN. [4Fe-4S] cluster-binding residues include C62, C65, C68, C72, C102, C105, C108, and C112.

It belongs to the complex I 23 kDa subunit family. NDH-1 is composed of 14 different subunits. Subunits NuoA, H, J, K, L, M, N constitute the membrane sector of the complex. The cofactor is [4Fe-4S] cluster.

The protein resides in the cell inner membrane. The catalysed reaction is a quinone + NADH + 5 H(+)(in) = a quinol + NAD(+) + 4 H(+)(out). NDH-1 shuttles electrons from NADH, via FMN and iron-sulfur (Fe-S) centers, to quinones in the respiratory chain. The immediate electron acceptor for the enzyme in this species is believed to be ubiquinone. Couples the redox reaction to proton translocation (for every two electrons transferred, four hydrogen ions are translocated across the cytoplasmic membrane), and thus conserves the redox energy in a proton gradient. The chain is NADH-quinone oxidoreductase subunit I from Bradyrhizobium sp. (strain BTAi1 / ATCC BAA-1182).